The chain runs to 303 residues: E3 ubiquitin-protein ligase CCNB1IP1 homolog (303 aa).

Residues 3–42 (CNACWRELEGQAVSTTCGHLLCTEDAKKILSNDAACPICD) form an RING-type; degenerate zinc finger. A coiled-coil region spans residues 119–184 (LEEVHTAYQK…YESAKRSAIQ (66 aa)). The disordered stretch occupies residues 201–268 (VPNIMDSSDP…DIRPRQPARP (68 aa)).

In terms of assembly, interacts with ZIP4 and PTD. Expressed in young panicles.

The protein resides in the nucleus. The protein localises to the chromosome. It carries out the reaction S-ubiquitinyl-[E2 ubiquitin-conjugating enzyme]-L-cysteine + [acceptor protein]-L-lysine = [E2 ubiquitin-conjugating enzyme]-L-cysteine + N(6)-ubiquitinyl-[acceptor protein]-L-lysine.. It functions in the pathway protein modification; protein ubiquitination. Functionally, ubiquitin E3 ligase required for class I crossover (CO) formation during meiosis. The protein is E3 ubiquitin-protein ligase CCNB1IP1 homolog of Oryza sativa subsp. japonica (Rice).